The following is a 205-amino-acid chain: Small ribosomal subunit protein uS4 (205 aa).

Residues 14-49 (RMGENIWGRPKSPVNRREYGPGQHGQRRKGKMSDFG) are disordered. An S4 RNA-binding domain is found at 94–157 (SRLDAIVYRA…KQLVTVLEAV (64 aa)).

The protein belongs to the universal ribosomal protein uS4 family. In terms of assembly, part of the 30S ribosomal subunit. Contacts protein S5. The interaction surface between S4 and S5 is involved in control of translational fidelity.

In terms of biological role, one of the primary rRNA binding proteins, it binds directly to 16S rRNA where it nucleates assembly of the body of the 30S subunit. With S5 and S12 plays an important role in translational accuracy. The sequence is that of Small ribosomal subunit protein uS4 from Agrobacterium fabrum (strain C58 / ATCC 33970) (Agrobacterium tumefaciens (strain C58)).